We begin with the raw amino-acid sequence, 231 residues long: DNA mismatch repair protein MutH (231 aa).

Belongs to the MutH family.

It is found in the cytoplasm. Functionally, sequence-specific endonuclease that cleaves unmethylated GATC sequences. It is involved in DNA mismatch repair. The sequence is that of DNA mismatch repair protein MutH from Salmonella paratyphi A (strain ATCC 9150 / SARB42).